A 235-amino-acid polypeptide reads, in one-letter code: Orotidine 5'-phosphate decarboxylase (235 aa).

Residues aspartate 9, lysine 31, 58 to 67 (DLKFHDIPNT), threonine 121, arginine 180, glutamine 190, glycine 210, and arginine 211 each bind substrate. The active-site Proton donor is the lysine 60.

The protein belongs to the OMP decarboxylase family. Type 1 subfamily. In terms of assembly, homodimer.

It catalyses the reaction orotidine 5'-phosphate + H(+) = UMP + CO2. It participates in pyrimidine metabolism; UMP biosynthesis via de novo pathway; UMP from orotate: step 2/2. Catalyzes the decarboxylation of orotidine 5'-monophosphate (OMP) to uridine 5'-monophosphate (UMP). This Nitratidesulfovibrio vulgaris (strain ATCC 29579 / DSM 644 / CCUG 34227 / NCIMB 8303 / VKM B-1760 / Hildenborough) (Desulfovibrio vulgaris) protein is Orotidine 5'-phosphate decarboxylase.